A 22-amino-acid polypeptide reads, in one-letter code: Superoxide dismutase [Cu-Zn] (22 aa).

Belongs to the Cu-Zn superoxide dismutase family. As to quaternary structure, homodimer. It depends on Cu cation as a cofactor. Zn(2+) is required as a cofactor.

It is found in the cytoplasm. It catalyses the reaction 2 superoxide + 2 H(+) = H2O2 + O2. Functionally, destroys radicals which are normally produced within the cells and which are toxic to biological systems. The protein is Superoxide dismutase [Cu-Zn] of Hordeum vulgare (Barley).